Consider the following 211-residue polypeptide: Uridine kinase (211 aa).

Gly13–Thr20 lines the ATP pocket.

The protein belongs to the uridine kinase family.

Its subcellular location is the cytoplasm. The catalysed reaction is uridine + ATP = UMP + ADP + H(+). It carries out the reaction cytidine + ATP = CMP + ADP + H(+). The protein operates within pyrimidine metabolism; CTP biosynthesis via salvage pathway; CTP from cytidine: step 1/3. It participates in pyrimidine metabolism; UMP biosynthesis via salvage pathway; UMP from uridine: step 1/1. In Lactobacillus johnsonii (strain CNCM I-12250 / La1 / NCC 533), this protein is Uridine kinase.